Here is a 374-residue protein sequence, read N- to C-terminus: Ribosomal RNA large subunit methyltransferase M (374 aa).

S-adenosyl-L-methionine is bound by residues serine 188, cysteine 221–glycine 224, aspartate 240, aspartate 260, and aspartate 276. The active-site Proton acceptor is the lysine 305.

The protein belongs to the class I-like SAM-binding methyltransferase superfamily. RNA methyltransferase RlmE family. RlmM subfamily. In terms of assembly, monomer.

The protein localises to the cytoplasm. It catalyses the reaction cytidine(2498) in 23S rRNA + S-adenosyl-L-methionine = 2'-O-methylcytidine(2498) in 23S rRNA + S-adenosyl-L-homocysteine + H(+). Catalyzes the 2'-O-methylation at nucleotide C2498 in 23S rRNA. This Edwardsiella ictaluri (strain 93-146) protein is Ribosomal RNA large subunit methyltransferase M.